The chain runs to 976 residues: Chitin synthase 3A (976 aa).

The disordered stretch occupies residues 29–72; the sequence is DDANASNRSPVSNPYEPDYDQLSPPPMLGAQRPVPEQNESSRDL. Residues 31–40 show a composition bias toward polar residues; sequence ANASNRSPVS. Residues asparagine 32, asparagine 66, asparagine 95, and asparagine 602 are each glycosylated (N-linked (GlcNAc...) asparagine). The next 7 helical transmembrane spans lie at 639-659, 684-704, 717-737, 773-793, 801-821, 903-923, and 944-964; these read LLNV…TTII, IVNV…FVLA, VLSF…TGYL, LIII…FLYL, SFPQ…VYAF, TGLV…VTTD, and FLLY…LWFI.

It belongs to the chitin synthase family. Class III subfamily.

The protein localises to the cell membrane. The enzyme catalyses [(1-&gt;4)-N-acetyl-beta-D-glucosaminyl](n) + UDP-N-acetyl-alpha-D-glucosamine = [(1-&gt;4)-N-acetyl-beta-D-glucosaminyl](n+1) + UDP + H(+). In terms of biological role, polymerizes chitin, a structural polymer of the cell wall and septum, by transferring the sugar moiety of UDP-GlcNAc to the non-reducing end of the growing chitin polymer. Shows additive effects in septum formation with CHS1, CHS2, CHS4, CHS5, CHS6 and CHS7. Involved in virulence and mediates mycotoxin deoxinivalenol (DON) biosynthesis via the regulation of the expression of TRI4, TRI5 and TRI6. The chain is Chitin synthase 3A from Gibberella zeae (strain ATCC MYA-4620 / CBS 123657 / FGSC 9075 / NRRL 31084 / PH-1) (Wheat head blight fungus).